The chain runs to 228 residues: Ribonuclease HII (228 aa).

The RNase H type-2 domain maps to 1-210 (MKIAGIDEAG…LKKIAEKVES (210 aa)). 3 residues coordinate a divalent metal cation: Asp-7, Glu-8, and Asp-105.

The protein belongs to the RNase HII family. As to quaternary structure, monomer. It depends on Mn(2+) as a cofactor. Requires Mg(2+) as cofactor.

The protein localises to the cytoplasm. The enzyme catalyses Endonucleolytic cleavage to 5'-phosphomonoester.. In terms of biological role, endonuclease that specifically degrades the RNA of RNA-DNA hybrids. The protein is Ribonuclease HII (rnhB) of Thermococcus kodakarensis (strain ATCC BAA-918 / JCM 12380 / KOD1) (Pyrococcus kodakaraensis (strain KOD1)).